Consider the following 181-residue polypeptide: Early upstream open reading frame (181 aa).

Belongs to the EUO family.

The polypeptide is Early upstream open reading frame (Chlamydia caviae (strain ATCC VR-813 / DSM 19441 / 03DC25 / GPIC) (Chlamydophila caviae)).